The primary structure comprises 651 residues: ATP-binding cassette sub-family G member 5 (651 aa).

The segment at 1 to 32 (MGDLSSLTPGGSMGLQVNRGSQSSLEGAPATA) is disordered. Residues 1 to 383 (MGDLSSLTPG…RVTRNLVRNK (383 aa)) lie on the Cytoplasmic side of the membrane. The region spanning 52-293 (RPWWDITSCR…FNDCGYPCPE (242 aa)) is the ABC transporter domain. An ATP-binding site is contributed by 86 to 93 (GSSGSGKT). Residues 384–404 (LAVITRLLQNLIMGLFLLFFV) form a helical membrane-spanning segment. In terms of domain architecture, ABC transmembrane type-2 spans 388 to 645 (TRLLQNLIMG…ILGIVVFKIR (258 aa)). Residues 405–421 (LRVRSNVLKGAIQDRVG) lie on the Extracellular side of the membrane. Residues 422–442 (LLYQFVGATPYTGMLNAVNLF) form a helical membrane-spanning segment. Residues 443–467 (PVLRAVSDQESQDGLYQKWQMMLAY) are Cytoplasmic-facing. Residues 468–489 (ALHVLPFSVVATMIFSSVCYWT) form a helical membrane-spanning segment. The Extracellular segment spans residues 490–500 (LGLHPEVARFG). Residues 501–521 (YFSAALLAPHLIGEFLTLVLL) form a helical membrane-spanning segment. The Cytoplasmic segment spans residues 522–528 (GIVQNPN). Residues 529-549 (IVNSVVALLSIAGVLVGSGFL) form a helical membrane-spanning segment. Residues 550–623 (RNIQEMPIPF…PGATSRFTMN (74 aa)) lie on the Extracellular side of the membrane. N584 and N591 each carry an N-linked (GlcNAc...) asparagine glycan. The helical transmembrane segment at 624–644 (FLILYSFIPALVILGIVVFKI) threads the bilayer. The Cytoplasmic portion of the chain corresponds to 645 to 651 (RDHLISR).

The protein belongs to the ABC transporter superfamily. ABCG family. Eye pigment precursor importer (TC 3.A.1.204) subfamily. Heterodimer with ABCG8. It depends on Mg(2+) as a cofactor. Post-translationally, N-glycosylated. Strongly expressed in the liver, lower levels in the small intestine and colon.

Its subcellular location is the cell membrane. It localises to the apical cell membrane. It carries out the reaction cholesterol(in) + ATP + H2O = cholesterol(out) + ADP + phosphate + H(+). The catalysed reaction is sitosterol(in) + ATP + H2O = sitosterol(out) + ADP + phosphate + H(+). With respect to regulation, the ATPase activity of the heterodimer is stimulated by cholate. Taurocholate, glycocholate, taurochenodeoxycholate, glycochenodeoxycholate and taurodeoxycholate also stimulate ATPase activity, but to a lower degree. Glycodeoxycholate has no significant effect on ATPase activity. ATPase activity is inhibited by vanadate and by berillium fluoride. Its function is as follows. ABCG5 and ABCG8 form an obligate heterodimer that mediates Mg(2+)- and ATP-dependent sterol transport across the cell membrane. Plays an essential role in the selective transport of dietary plant sterols and cholesterol in and out of the enterocytes and in the selective sterol excretion by the liver into bile. Required for normal sterol homeostasis. The heterodimer with ABCG8 has ATPase activity. This is ATP-binding cassette sub-family G member 5 from Homo sapiens (Human).